A 379-amino-acid chain; its full sequence is MKNEMLALILAGGQGTRLGKLTQSIAKPAVQFGGRYRIIDFALSNCANSGINNVGVITQYQPLELNTHIGNGSSWGLDGIDSGVTVLQPYSATEGNRWFQGTSHAIYQNIDYIDRINPEYVLILSGDHIYKMDYDDMLQTHKDNLASLTVAVLDVPLKEASRFGIMNTDSNDRIVEFEEKPEHPKSTKASMGIYIFDWKRLRTVLIDGEKNGIDMSDFGKNVIPAYLESGERVYTYNFDGYWKDVGTIESLWEANMEYIGEDNKLHSRDRSWKIYSKNLIAPPNFMTEDANVKDSLVVDGCFVAGNVEHSILSTNVQVKPNAIIKDSFVMSGATIGEGAKINRAIIGEDAVIGDGVVIDGSKEVEVIGYKEVVGVPNED.

Alpha-D-glucose 1-phosphate is bound by residues Gly-164, 179–180 (EK), and Ser-190.

It belongs to the bacterial/plant glucose-1-phosphate adenylyltransferase family. Homotetramer.

It carries out the reaction alpha-D-glucose 1-phosphate + ATP + H(+) = ADP-alpha-D-glucose + diphosphate. Its pathway is glycan biosynthesis; glycogen biosynthesis. Functionally, involved in the biosynthesis of ADP-glucose, a building block required for the elongation reactions to produce glycogen. Catalyzes the reaction between ATP and alpha-D-glucose 1-phosphate (G1P) to produce pyrophosphate and ADP-Glc. The chain is Glucose-1-phosphate adenylyltransferase from Streptococcus agalactiae serotype III (strain NEM316).